The primary structure comprises 528 residues: Dihydromonacolin L monooxygenase LovA (528 aa).

Topologically, residues 1 to 23 are cytoplasmic; the sequence is MTVDALTQPHHLLSLAWNDTQQH. The helical; Signal-anchor for type II membrane protein transmembrane segment at 24–44 threads the bilayer; the sequence is GSWFAPLVTTSAGLLCLLLYL. Residues 45–528 are Lumenal-facing; that stretch reads CSSGRRSDLP…DEDIRLPGSL (484 aa). A heme-binding site is contributed by Cys465.

It belongs to the cytochrome P450 family. Heme is required as a cofactor.

The protein resides in the membrane. It localises to the endoplasmic reticulum membrane. It carries out the reaction dihydromonacolin L carboxylate + reduced [NADPH--hemoprotein reductase] + O2 = monacolin L carboxylate + oxidized [NADPH--hemoprotein reductase] + 2 H2O + H(+). It catalyses the reaction monacolin L carboxylate + reduced [NADPH--hemoprotein reductase] + O2 = monacolin J carboxylate + oxidized [NADPH--hemoprotein reductase] + H2O + H(+). It participates in polyketide biosynthesis; lovastatin biosynthesis. Functionally, dihydromonacolin L monooxygenase; part of the gene cluster that mediates the biosynthesis of lovastatin (also known as mevinolin, mevacor or monacolin K), a hypolipidemic inhibitor of (3S)-hydroxymethylglutaryl-coenzyme A (HMG-CoA) reductase (HMGR). The first step in the biosynthesis of lovastatin is the production of dihydromonacolin L acid by the lovastatin nonaketide synthase lovB and the trans-acting enoyl reductase lovC via condensation of one acetyl-CoA unit and 8 malonyl-CoA units. Dihydromonacolin L acid is released from lovB by the thioesterase lovG. Next, dihydromonacolin L acid is oxidized by the dihydromonacolin L monooxygenase lovA twice to form monacolin J acid. The 2-methylbutyrate moiety of lovastatin is synthesized by the lovastatin diketide synthase lovF via condensation of one acetyl-CoA unit and one malonyl-CoA unit. Finally, the covalent attachment of this moiety to monacolin J acid is catalyzed by the transesterase lovD to yield lovastatin. LovD has broad substrate specificity and can also convert monacolin J to simvastatin using alpha-dimethylbutanoyl-S-methyl-3-mercaptopropionate (DMB-S-MMP) as the thioester acyl donor, and can also catalyze the reverse reaction and function as hydrolase in vitro. LovD has much higher activity with LovF-bound 2-methylbutanoate than with free diketide substrates. The protein is Dihydromonacolin L monooxygenase LovA of Aspergillus terreus.